We begin with the raw amino-acid sequence, 512 residues long: Cytochrome P450 monooxygenase gliC (512 aa).

The first 19 residues, 1–19 (MAFTLTILVPCMVLALVAA), serve as a signal peptide directing secretion. Asparagine 118, asparagine 421, and asparagine 434 each carry an N-linked (GlcNAc...) asparagine glycan. Position 452 (cysteine 452) interacts with heme.

Belongs to the cytochrome P450 family. Requires heme as cofactor.

It participates in mycotoxin biosynthesis. In terms of biological role, cytochrome P450 monooxygenase; part of the gene cluster that mediates the biosynthesis of gliotoxin, a member of the epipolythiodioxopiperazine (ETP) class of toxins characterized by a disulfide bridged cyclic dipeptide. The first step in gliotoxin biosynthesis is the condensation of serine and phenylalanine to form the cyclo-L-phenylalanyl-L-serine diketopiperazine (DKP) by the NRPS gliP. GliP is also able to produce the DKP cyclo-L-tryptophanyl-L-serine, suggesting that the substrate specificity of the first adenylation (A) domain in gliP is sufficiently relaxed to accommodate both L-Phe and L-Trp. The cytochrome P450 monooxygenase gliC has been shown to catalyze the subsequent hydroxylation of the alpha-carbon of L-Phe in cyclo-L-phenylalanyl-L-serine whereas the second cytochrome P450 enzyme, gliF, is presumably involved in the modification of the DKP side chain. The glutathione S-transferase (GST) gliG then forms a bis-glutathionylated biosynthetic intermediate which is responsible for the sulfurization of gliotoxin. This bis-glutathionylated intermediate is subsequently processed by the gamma-glutamyl cyclotransferase gliK to remove both gamma-glutamyl moieties. Subsequent processing via gliI yields a biosynthetic intermediate, which is N-methylated via the N-methyltransferase gliN, before the gliotoxin oxidoreductase gliT-mediated disulfide bridge closure. GliN-mediated amide methylation confers stability to ETP, damping the spontaneous formation of tri- and tetrasulfides. Intracellular dithiol gliotoxin oxidized by gliT is subsequently effluxed by gliA. Gliotoxin contributes to pathogenesis during invasive aspergillosis. In macrophages and neutrophils, gliotoxin showed inhibition of various different cell functions including cytokine production, antigen presentation, phagocytosis, and production of reactive oxygen species. The chain is Cytochrome P450 monooxygenase gliC from Aspergillus fumigatus (strain ATCC MYA-4609 / CBS 101355 / FGSC A1100 / Af293) (Neosartorya fumigata).